The following is a 199-amino-acid chain: ParB-like protein Saci_1498 (199 aa).

This sequence belongs to the ParB family.

In terms of biological role, probably part of a 4-gene DNA damage response locus in which the upstream ups system, in combination with this downstream locus, functions in homologous recombination to rescue Sulfolobales from DNA-damaging threats. This protein might function in the DNA transfer machinery. The protein is ParB-like protein Saci_1498 of Sulfolobus acidocaldarius (strain ATCC 33909 / DSM 639 / JCM 8929 / NBRC 15157 / NCIMB 11770).